Reading from the N-terminus, the 149-residue chain is Large ribosomal subunit protein bL9 (149 aa).

This sequence belongs to the bacterial ribosomal protein bL9 family.

Functionally, binds to the 23S rRNA. This chain is Large ribosomal subunit protein bL9, found in Pasteurella multocida (strain Pm70).